The sequence spans 1379 residues: Increased rDNA silencing protein 4 homolog (1379 aa).

Disordered stretches follow at residues 1 to 25 (MDAI…RNLS), 138 to 159 (TSTR…HHPR), 240 to 314 (EFDF…PLPS), 337 to 370 (SQPF…QAIM), 534 to 573 (ASKR…ASQQ), 768 to 816 (TDLH…NDIG), 1047 to 1110 (DAPS…KDSQ), and 1168 to 1208 (AVHE…DGKY). The span at 250-259 (PSDKNLEKLK) shows a compositional bias: basic and acidic residues. A compositionally biased stretch (polar residues) spans 262-287 (ASKQASESQSLKNMESLSLARSSPIL). Positions 541–555 (SQQTESASKSSSNIS) are enriched in low complexity. Positions 562 to 573 (PPSNFSISASQQ) are enriched in polar residues. Basic residues predominate over residues 770-780 (LHRKPRRKHKS). The span at 793-802 (DESPQSDEVE) shows a compositional bias: acidic residues. Positions 1240–1329 (AANKGYLLSK…DSVWLSSKRM (90 aa)) constitute an EH domain. One can recognise an EF-hand domain in the interval 1273–1308 (APTSVLAKIYDLVDRHHTGVLGRDEFIVGMFLIDQY).

This sequence belongs to the IRS4 family.

In terms of biological role, positive regulator of phosphatidylinositol 4,5-bisphosphate turnover and negatively regulates signaling through the cell integrity pathway. Involved in rDNA silencing. The protein is Increased rDNA silencing protein 4 homolog of Schizosaccharomyces pombe (strain 972 / ATCC 24843) (Fission yeast).